Here is a 570-residue protein sequence, read N- to C-terminus: Mitoguardin 1 (570 aa).

The chain crosses the membrane as a helical span at residues 34 to 54; sequence GLKKIIAVAAISGVSLIFLAC.

The protein belongs to the mitoguardin family. In terms of assembly, homodimer and heterodimer; forms heterodimers with miga2.

The protein resides in the mitochondrion outer membrane. In terms of biological role, regulator of mitochondrial fusion: acts by forming homo- and heterodimers at the mitochondrial outer membrane and facilitating the formation of pld6/MitoPLD dimers. May act by regulating phospholipid metabolism via pld6/MitoPLD. This Xenopus laevis (African clawed frog) protein is Mitoguardin 1.